A 529-amino-acid polypeptide reads, in one-letter code: Heat shock protein 60 (529 aa).

The disordered stretch occupies residues 460–484; that stretch reads YQATVQHPPPQSSYEEDGRRPPTQP.

The protein is Heat shock protein 60 of Giardia intestinalis (Giardia lamblia).